The sequence spans 209 residues: Probable septum site-determining protein MinC (209 aa).

Belongs to the MinC family. In terms of assembly, interacts with MinD and FtsZ.

In terms of biological role, cell division inhibitor that blocks the formation of polar Z ring septums. Rapidly oscillates between the poles of the cell to destabilize FtsZ filaments that have formed before they mature into polar Z rings. Prevents FtsZ polymerization. This Clostridium kluyveri (strain NBRC 12016) protein is Probable septum site-determining protein MinC.